A 440-amino-acid polypeptide reads, in one-letter code: GTPase Der (440 aa).

EngA-type G domains lie at 4 to 168 and 177 to 352; these read PVVA…PPEK and IKIA…GRHS. GTP contacts are provided by residues 10–17, 57–61, 120–123, 183–190, 230–234, and 295–298; these read GRPNVGKS, DTGGL, NKVE, DTAGM, and NKWD. Residues 353 to 437 form the KH-like domain; that stretch reads MRISTPGLNA…PIRFVLRKKT (85 aa).

Belongs to the TRAFAC class TrmE-Era-EngA-EngB-Septin-like GTPase superfamily. EngA (Der) GTPase family. Associates with the 50S ribosomal subunit.

In terms of biological role, GTPase that plays an essential role in the late steps of ribosome biogenesis. In Pelotomaculum thermopropionicum (strain DSM 13744 / JCM 10971 / SI), this protein is GTPase Der.